The sequence spans 154 residues: tRNA-splicing endonuclease (154 aa).

Catalysis depends on residues Tyr-86, His-102, and Lys-133.

The protein belongs to the tRNA-intron endonuclease family. Archaeal short subfamily. Homotetramer; although the tetramer contains four active sites, only two participate in the cleavage. Therefore, it should be considered as a dimer of dimers.

It carries out the reaction pretRNA = a 3'-half-tRNA molecule with a 5'-OH end + a 5'-half-tRNA molecule with a 2',3'-cyclic phosphate end + an intron with a 2',3'-cyclic phosphate and a 5'-hydroxyl terminus.. Endonuclease that removes tRNA introns. Cleaves pre-tRNA at the 5'- and 3'-splice sites to release the intron. The products are an intron and two tRNA half-molecules bearing 2',3' cyclic phosphate and 5'-OH termini. Recognizes a pseudosymmetric substrate in which 2 bulged loops of 3 bases are separated by a stem of 4 bp. This chain is tRNA-splicing endonuclease, found in Nanoarchaeum equitans (strain Kin4-M).